Reading from the N-terminus, the 179-residue chain is Large ribosomal subunit protein uL5c (179 aa).

It belongs to the universal ribosomal protein uL5 family. In terms of assembly, part of the 50S ribosomal subunit; contacts the 5S rRNA.

It is found in the plastid. The protein localises to the chloroplast. Functionally, binds 5S rRNA, forms part of the central protuberance of the 50S subunit. The sequence is that of Large ribosomal subunit protein uL5c (rpl5) from Euglena gracilis.